A 415-amino-acid chain; its full sequence is Multidrug resistance protein MdtA (415 aa).

The signal sequence occupies residues 1–21 (MKGSYKSRWVIVIVVVIAAIA). Disordered stretches follow at residues 32–56 (SRSAAPGATKQAQQSPAGGRRGMRA) and 392–415 (EAQSATTSEEKATSREYAKKGARS). A compositionally biased stretch (basic and acidic residues) spans 399–415 (SEEKATSREYAKKGARS).

This sequence belongs to the membrane fusion protein (MFP) (TC 8.A.1) family. In terms of assembly, part of a tripartite efflux system composed of MdtA, MdtB and MdtC.

The protein resides in the cell inner membrane. The MdtABC tripartite complex confers resistance against novobiocin and deoxycholate. The sequence is that of Multidrug resistance protein MdtA from Escherichia coli O7:K1 (strain IAI39 / ExPEC).